The following is a 416-amino-acid chain: Keratin, type I cuticular Ha1 (416 aa).

Residues 2-56 (PYNCCLPALSCRTSCSSRPCVPPSCHGCTLPGACNIPANVGNCNWFCEGSFNGNE) are head. The 312-residue stretch at 56-367 (EKETMQFLND…GLLESEDCKL (312 aa)) folds into the IF rod domain. The tract at residues 57–91 (KETMQFLNDRLASYMEKVRQLERENAELECRIQER) is coil 1A. The segment at 92–102 (NQQQDPLVCPA) is linker 1. Residues 103 to 203 (YQAYFRTIEE…HEEEVNTLRC (101 aa)) are coil 1B. A linker 12 region spans residues 204–219 (QLGDRLNVEVDAAPTV). The coil 2 stretch occupies residues 220 to 363 (DLNRVLNETR…NTYRGLLESE (144 aa)). A tail region spans residues 364 to 416 (DCKLPCNPCATSNACGKPIGPCVSNPCVPCPPPAPCTPCVPRPRCGPCNSFVR).

It belongs to the intermediate filament family.

In Mus musculus (Mouse), this protein is Keratin, type I cuticular Ha1 (Krt31).